Consider the following 461-residue polypeptide: Bifunctional protein HldE (461 aa).

The segment at 1–312 (MLEFLSQQKP…IKSFNRVDFE (312 aa)) is ribokinase. 191–194 (NKKE) lines the ATP pocket. Aspartate 259 is an active-site residue. Residues 334–461 (FTNGCFDIVH…KIIEKIKDKK (128 aa)) form a cytidylyltransferase region.

In the N-terminal section; belongs to the carbohydrate kinase PfkB family. This sequence in the C-terminal section; belongs to the cytidylyltransferase family. Homodimer.

The catalysed reaction is D-glycero-beta-D-manno-heptose 7-phosphate + ATP = D-glycero-beta-D-manno-heptose 1,7-bisphosphate + ADP + H(+). It carries out the reaction D-glycero-beta-D-manno-heptose 1-phosphate + ATP + H(+) = ADP-D-glycero-beta-D-manno-heptose + diphosphate. It participates in nucleotide-sugar biosynthesis; ADP-L-glycero-beta-D-manno-heptose biosynthesis; ADP-L-glycero-beta-D-manno-heptose from D-glycero-beta-D-manno-heptose 7-phosphate: step 1/4. It functions in the pathway nucleotide-sugar biosynthesis; ADP-L-glycero-beta-D-manno-heptose biosynthesis; ADP-L-glycero-beta-D-manno-heptose from D-glycero-beta-D-manno-heptose 7-phosphate: step 3/4. Catalyzes the phosphorylation of D-glycero-D-manno-heptose 7-phosphate at the C-1 position to selectively form D-glycero-beta-D-manno-heptose-1,7-bisphosphate. Its function is as follows. Catalyzes the ADP transfer from ATP to D-glycero-beta-D-manno-heptose 1-phosphate, yielding ADP-D-glycero-beta-D-manno-heptose. The chain is Bifunctional protein HldE from Campylobacter jejuni subsp. doylei (strain ATCC BAA-1458 / RM4099 / 269.97).